The primary structure comprises 760 residues: Catalase-peroxidase (760 aa).

The interval 1–24 is disordered; sequence MAESKCPFKSQGSRSNVAGGGTRN. Positions 96–242 form a cross-link, tryptophyl-tyrosyl-methioninium (Trp-Tyr) (with M-268); sequence WHSAGTYRVF…LAAAHMGLIY (147 aa). His-97 serves as the catalytic Proton acceptor. A cross-link (tryptophyl-tyrosyl-methioninium (Tyr-Met) (with W-96)) is located at residues 242-268; the sequence is YVNPEGPDGNPDPVAAAHDIRVTFGRM. A heme b-binding site is contributed by His-283.

The protein belongs to the peroxidase family. Peroxidase/catalase subfamily. Homodimer or homotetramer. It depends on heme b as a cofactor. In terms of processing, formation of the three residue Trp-Tyr-Met cross-link is important for the catalase, but not the peroxidase activity of the enzyme.

It localises to the cytoplasm. It carries out the reaction H2O2 + AH2 = A + 2 H2O. It catalyses the reaction 2 H2O2 = O2 + 2 H2O. Functionally, bifunctional enzyme with both catalase and broad-spectrum peroxidase activity. In Aspergillus clavatus (strain ATCC 1007 / CBS 513.65 / DSM 816 / NCTC 3887 / NRRL 1 / QM 1276 / 107), this protein is Catalase-peroxidase.